The following is a 254-amino-acid chain: MQIDLNADLGEGCGSDEALLDLVTSANIACGWHAGGANAMRDCVRWAVQKGVAIGAHPSFHDPENFGRKEMQLPASDIYAGVLYQLGALSAIAQAEGGRIAHVKPHGALYNQAARDPMIADAVVSAIRDFDPSLAVFGLANSVFVAAARHAGLAAVEEVFADRGYRADGSLVPRNQPGALIDDEDTMIARTLDMVRSRQVRAIGGEWVMLNAQTVCLHGDGPHALVFAKRIRAALEAVGVDVVAPGMLQADERA.

The protein belongs to the LamB/PxpA family. As to quaternary structure, forms a complex composed of PxpA, PxpB and PxpC.

It carries out the reaction 5-oxo-L-proline + ATP + 2 H2O = L-glutamate + ADP + phosphate + H(+). In terms of biological role, catalyzes the cleavage of 5-oxoproline to form L-glutamate coupled to the hydrolysis of ATP to ADP and inorganic phosphate. The polypeptide is 5-oxoprolinase subunit A (Burkholderia lata (strain ATCC 17760 / DSM 23089 / LMG 22485 / NCIMB 9086 / R18194 / 383)).